We begin with the raw amino-acid sequence, 325 residues long: Phospholipid phosphatase-related protein type 1 (325 aa).

A run of 3 helical transmembrane segments spans residues 11-31 (YSII…TVLL), 67-87 (FISP…IIFI), and 127-147 (FIGV…AGQV). A glycan (N-linked (GlcNAc...) asparagine) is linked at Asn-163. A run of 3 helical transmembrane segments spans residues 201 to 218 (AALS…ITST), 230 to 247 (VLCL…LNRV), and 257 to 277 (VIGG…CVVH). N-linked (GlcNAc...) asparagine glycosylation occurs at Asn-316.

Belongs to the PA-phosphatase related phosphoesterase family.

The protein resides in the cell membrane. The protein localises to the cell projection. It localises to the neuron projection. May play a role in neurite outgrowth and neurogenesis. In Xenopus tropicalis (Western clawed frog), this protein is Phospholipid phosphatase-related protein type 1.